The following is a 203-amino-acid chain: Thymidylate kinase (203 aa).

Position 14 to 21 (14 to 21 (GGEGIGKS)) interacts with ATP.

The protein belongs to the thymidylate kinase family.

It catalyses the reaction dTMP + ATP = dTDP + ADP. Phosphorylation of dTMP to form dTDP in both de novo and salvage pathways of dTTP synthesis. This chain is Thymidylate kinase, found in Rickettsia rickettsii (strain Iowa).